A 215-amino-acid chain; its full sequence is Large ribosomal subunit protein eL15 (215 aa).

Residues 179–215 (GTVKHKWKKKEKEREQKKRHEATKYYRLQNYDKLPGK) are disordered. The segment covering 188–202 (KEKEREQKKRHEATK) has biased composition (basic and acidic residues).

Belongs to the eukaryotic ribosomal protein eL15 family.

In Sulfurisphaera tokodaii (strain DSM 16993 / JCM 10545 / NBRC 100140 / 7) (Sulfolobus tokodaii), this protein is Large ribosomal subunit protein eL15.